The primary structure comprises 82 residues: Defensin-like protein 208 (82 aa).

The N-terminal stretch at 1–29 is a signal peptide; it reads MAKNLNTVSFTVLLLVLLMASTGILETEA. 3 disulfide bridges follow: Cys-38/Cys-63, Cys-50/Cys-76, and Cys-54/Cys-78.

The protein belongs to the DEFL family.

It is found in the secreted. In Arabidopsis thaliana (Mouse-ear cress), this protein is Defensin-like protein 208.